Reading from the N-terminus, the 237-residue chain is Mannose-specific lectin alpha chain (237 aa).

Glu-8 and Asp-10 together coordinate Mn(2+). Ca(2+) contacts are provided by Asp-10, Tyr-12, Asn-14, and Asp-19. Tyr-12 contacts a carbohydrate. Mn(2+)-binding residues include Asp-19, His-24, and Ser-34. 99–100 (LY) serves as a coordination point for a carbohydrate. A Ca(2+)-binding site is contributed by Asp-208. A carbohydrate is bound at residue Arg-228.

The protein belongs to the leguminous lectin family. As to quaternary structure, homotetramer. Post-translationally, the beta and gamma chains are produced by partial proteolytic processing of the lectin alpha chain by an asparaginyl endopeptidase.

In terms of biological role, D-mannose/D-glucose-binding lectin. Also binds derivatives of glucose and mannose such as more complex glycans. This Cymbosema roseum (Dioclea purpurea) protein is Mannose-specific lectin alpha chain.